The primary structure comprises 747 residues: Anoctamin-9 (747 aa).

The Cytoplasmic portion of the chain corresponds to 1 to 193 (MQDDESSQIF…LYFTWLGWYT (193 aa)). Residues 194-214 (YMLVPAAVVGLIVFLSGFALF) form a helical membrane-spanning segment. At 215–259 (DSSQISKEICSANDIFMCPLGDHSHRYLRLSEMCTFAKLTHLFDN) the chain is on the extracellular side. A Phosphoserine; by PKA modification is found at serine 245. Residues 260–280 (EGTVLFAIFMALWATVFLEIW) form a helical membrane-spanning segment. The Cytoplasmic segment spans residues 281 to 326 (KRKRAHEVQSWKLYEWDEEEEEMALELINSPHYKLKDHRHSYLSST). A helical membrane pass occupies residues 327–347 (IILILSLFMICLMIGMAHVLV). Over 348–364 (VYRVLAGALFSSLVKQQ) the chain is Extracellular. A helical transmembrane segment spans residues 365 to 385 (VTTAVVVTGAVVHYIIIVIMT). Over 386-414 (KVNKYVALKLCKFEESGTFSEQERKFTVK) the chain is Cytoplasmic. Residues 415–435 (FFILQFFAHFSSLIYIAFILG) form a helical membrane-spanning segment. The Extracellular portion of the chain corresponds to 436–543 (RINGHPGKST…EMMIQYGFTT (108 aa)). The chain crosses the membrane as a helical span at residues 544–564 (IFVAAFPLAPLLALFSNLVEI). The Cytoplasmic portion of the chain corresponds to 565 to 595 (RLDAIKMVRLQRRLVPRKAKDIGTWLQVLET). A helical transmembrane segment spans residues 596–616 (IGVLAVIANGMVIAFTSEFIP). Over 617 to 695 (RVVYKYHYGP…FWFILAIRLT (79 aa)) the chain is Extracellular. 4 N-linked (GlcNAc...) asparagine glycosylation sites follow: asparagine 630, asparagine 643, asparagine 665, and asparagine 681. A helical membrane pass occupies residues 696–716 (FVILFEHFALCIKLIAAWFVP). Topologically, residues 717 to 747 (DVPQKVKNEVLQEKYDRIRHRMRFSSRSTDV) are cytoplasmic.

Belongs to the anoctamin family. Phosphorylation on Ser-245 by cAMP-dependent protein kinase A (PKA)is essential for activation of its cation channel activity. As to expression, highly expressed in the olfactory epithelium, particularly in mature olfactory sensory neurons (at protein level). Expressed in the kidney (at protein level). Predominant expression seen in epithelial tissues. Highly expressed in the small intestine, colon and stomach.

It is found in the cell membrane. It localises to the endoplasmic reticulum. It catalyses the reaction a 1,2-diacyl-sn-glycero-3-phospho-L-serine(in) = a 1,2-diacyl-sn-glycero-3-phospho-L-serine(out). The enzyme catalyses a beta-D-galactosyl-(1&lt;-&gt;1')-N-acylsphing-4-enine(out) = a beta-D-galactosyl-(1&lt;-&gt;1')-N-acylsphing-4-enine(in). It carries out the reaction a 1,2-diacyl-sn-glycero-3-phosphocholine(in) = a 1,2-diacyl-sn-glycero-3-phosphocholine(out). The catalysed reaction is Ca(2+)(in) = Ca(2+)(out). It catalyses the reaction Na(+)(in) = Na(+)(out). The enzyme catalyses K(+)(in) = K(+)(out). With respect to regulation, cation channel activity is activated via phosphorylation on Ser-245 by cAMP-dependent protein kinase A (PKA). Inhibited by NaCl. PKA-activated nonselective cation channel. Discriminates poorly among cations but is more permeable to Ca(2+) ions than to monovalent cations. Acts as a calcium-activated calcium permeable channel which may operate as a endoplasmic reticulum (ER) Ca(2+)-leak channel, reducing the loading of the ER Ca(2+) store. Regulates intracellular Ca2+ signals, ion channel activity, and cytokine release in the renal tissue. Plays an important role in olfaction, amplifying cAMP-evoked cyclic nucleotide-gated (CNG) channel currents in the olfactory sensory neurons. Has calcium-dependent phospholipid scramblase activity; scrambles phosphatidylserine, phosphatidylcholine and galactosylceramide. Does not exhibit calcium-activated chloride channel (CaCC) activity. Can inhibit the activity of ANO1. The sequence is that of Anoctamin-9 from Mus musculus (Mouse).